Consider the following 172-residue polypeptide: Crossover junction endodeoxyribonuclease RuvC (172 aa).

Catalysis depends on residues Asp-12, Glu-71, and Asp-143. Residues Asp-12, Glu-71, and Asp-143 each coordinate Mg(2+).

The protein belongs to the RuvC family. As to quaternary structure, homodimer which binds Holliday junction (HJ) DNA. The HJ becomes 2-fold symmetrical on binding to RuvC with unstacked arms; it has a different conformation from HJ DNA in complex with RuvA. In the full resolvosome a probable DNA-RuvA(4)-RuvB(12)-RuvC(2) complex forms which resolves the HJ. Mg(2+) serves as cofactor.

It is found in the cytoplasm. The enzyme catalyses Endonucleolytic cleavage at a junction such as a reciprocal single-stranded crossover between two homologous DNA duplexes (Holliday junction).. Functionally, the RuvA-RuvB-RuvC complex processes Holliday junction (HJ) DNA during genetic recombination and DNA repair. Endonuclease that resolves HJ intermediates. Cleaves cruciform DNA by making single-stranded nicks across the HJ at symmetrical positions within the homologous arms, yielding a 5'-phosphate and a 3'-hydroxyl group; requires a central core of homology in the junction. The consensus cleavage sequence is 5'-(A/T)TT(C/G)-3'. Cleavage occurs on the 3'-side of the TT dinucleotide at the point of strand exchange. HJ branch migration catalyzed by RuvA-RuvB allows RuvC to scan DNA until it finds its consensus sequence, where it cleaves and resolves the cruciform DNA. The protein is Crossover junction endodeoxyribonuclease RuvC of Coxiella burnetii (strain CbuG_Q212) (Coxiella burnetii (strain Q212)).